The following is a 458-amino-acid chain: ATP synthase subunit beta (458 aa).

148–155 (GGAGVGKT) contacts ATP.

The protein belongs to the ATPase alpha/beta chains family. As to quaternary structure, F-type ATPases have 2 components, CF(1) - the catalytic core - and CF(0) - the membrane proton channel. CF(1) has five subunits: alpha(3), beta(3), gamma(1), delta(1), epsilon(1). CF(0) has three main subunits: a(1), b(2) and c(9-12). The alpha and beta chains form an alternating ring which encloses part of the gamma chain. CF(1) is attached to CF(0) by a central stalk formed by the gamma and epsilon chains, while a peripheral stalk is formed by the delta and b chains.

The protein resides in the cell inner membrane. It catalyses the reaction ATP + H2O + 4 H(+)(in) = ADP + phosphate + 5 H(+)(out). In terms of biological role, produces ATP from ADP in the presence of a proton gradient across the membrane. The catalytic sites are hosted primarily by the beta subunits. The protein is ATP synthase subunit beta of Shewanella halifaxensis (strain HAW-EB4).